Consider the following 593-residue polypeptide: Copine-5 (593 aa).

In terms of domain architecture, C2 1 spans 2-134 (EQPEDMASLS…SPGSRLEKPL (133 aa)). Phosphoserine is present on S19. Ca(2+) is bound by residues D38, D44, D98, D100, S103, K108, and D110. A Phosphoserine modification is found at S103. S140 is subject to Phosphoserine. Positions 161 to 284 (KCGTIILSAE…ARGQSQFNIY (124 aa)) constitute a C2 2 domain. Residues D192, D198, D254, D256, and D262 each contribute to the Ca(2+) site. Residues 328 to 554 (NFTVAIDFTA…DVLAEIPDQL (227 aa)) form the VWFA domain. Residues 562–593 (GIRPRPPPAAPTHSPSQSPARTPPASPLHTHI) are disordered. Over residues 572–581 (PTHSPSQSPA) the composition is skewed to low complexity.

The protein belongs to the copine family. Ca(2+) is required as a cofactor. As to expression, expressed in the brain, heart, stomach, spleen, lymph node and testis. Expressed in melanocytes.

It localises to the perikaryon. The protein localises to the cell projection. Functionally, probable calcium-dependent phospholipid-binding protein that may play a role in calcium-mediated intracellular processes. Plays a role in dendrite formation by melanocytes. The protein is Copine-5 of Homo sapiens (Human).